A 340-amino-acid polypeptide reads, in one-letter code: Outer membrane protein B (340 aa).

Positions 1-26 are cleaved as a signal peptide; the sequence is MSSKLVNYLRLTFLSFLGIASTSLDA.

The protein belongs to the chlamydial OMP family.

Its subcellular location is the cell outer membrane. The protein is Outer membrane protein B (ompB) of Chlamydia trachomatis serovar D (strain ATCC VR-885 / DSM 19411 / UW-3/Cx).